The chain runs to 2228 residues: Genome polyprotein (2228 aa).

A disordered region spans residues 55 to 76; that stretch reads TAEVGSHQPEPLKTSVDKPGSK. 2 short sequence motifs ((L)YPX(n)L motif) span residues 167-171 and 200-205; these read YPHGL and YPVWEL. An involved in P1-2A pentamerization region spans residues 766 to 836; the sequence is MMDRIALGDL…PRKIKGVFSQ (71 aa). A helical transmembrane segment spans residues 1011–1031; sequence TVEIINTVLCFVKSGILLYVI. The interval 1043-1070 is membrane-penetrating ability; it reads IGLLRVMNYADIGCSVISCGKVFSKMLE. Residues 1127–1153 adopt a coiled-coil conformation; that stretch reads NKKDVLNILKDHQQKIERAIEEADNFC. Positions 1204–1366 constitute an SF3 helicase domain; that stretch reads HQKLKNLGSI…SFFKNPHNDM (163 aa). 1230–1237 provides a ligand contact to ATP; sequence GKRGGGKS. Residues 1462–1482 traverse the membrane as a helical segment; the sequence is WVAVGAAVGVLGVLVGGWYVY. Y1499 carries the post-translational modification O-(5'-phospho-RNA)-tyrosine. One can recognise a Peptidase C3 domain in the interval 1514-1728; it reads DPVESQSTLE…VAKLVTQEMF (215 aa). Residues H1563, D1603, and C1691 each act as for protease 3C activity in the active site. In terms of domain architecture, RdRp catalytic spans 1977 to 2098; the sequence is DVGLDLDFSA…VFSRQVQIDN (122 aa).

Belongs to the picornaviridae polyprotein family. In terms of assembly, homodimer. Homomultimer; probably interacts with membranes in a multimeric form. Seems to assemble into amyloid-like fibers. As to quaternary structure, homodimer. Monomer. Interacts with protein 3CD. Interacts with host ACBD3. In terms of assembly, interacts with protein 3AB. As to quaternary structure, interacts with human MAVS. Homodimer; disulfide-linked. In terms of assembly, homopentamer. Homooligomer. As to quaternary structure, interacts with capsid protein VP2. Interacts with capsid protein VP3. Interacts with capsid protein VP1. Interacts with capsid protein VP3. In terms of assembly, interacts with capsid protein VP1. Interacts with capsid protein VP2. In terms of processing, specific enzymatic cleavages by viral protease in vivo yield a variety of precursors and mature proteins. Polyprotein processing intermediates are produced, such as P1-2A which is a functional precursor of the structural proteins, VP0 which is a VP4-VP2 precursor, VP1-2A precursor, 3ABC precursor which is a stable and catalytically active precursor of 3A, 3B and 3C proteins, 3AB and 3CD precursors. The assembly signal 2A is removed from VP1-2A by a host protease, possibly host Cathepsin L. This cleavage occurs over a region of 3 amino-acids probably generating VP1 proteins with heterogeneous C-termini. During virion maturation, immature virions are rendered infectious following cleavage of VP0 into VP4 and VP2. This maturation seems to be an autocatalytic event triggered by the presence of RNA in the capsid and is followed by a conformational change of the particle. Post-translationally, the assembly signal 2A is removed from VP1-2A by a host protease, possibly host Cathepsin L in naked virions. This cleavage does not occur in enveloped virions. This cleavage occurs over a region of 3 amino-acids probably generating VP1 proteins with heterogeneous C-termini. In terms of processing, VPg is uridylylated prior to priming replication into VPg-pUpU. Unlike other picornaviruses, does not seem to be myristoylated.

It is found in the virion. Its subcellular location is the host endosome. The protein localises to the host multivesicular body. It localises to the host membrane. The protein resides in the host mitochondrion outer membrane. It is found in the host cytoplasm. Its subcellular location is the host cytoplasmic vesicle membrane. The catalysed reaction is RNA(n) + a ribonucleoside 5'-triphosphate = RNA(n+1) + diphosphate. It carries out the reaction a ribonucleoside 5'-triphosphate + H2O = a ribonucleoside 5'-diphosphate + phosphate + H(+). The enzyme catalyses Selective cleavage of Gln-|-Gly bond in the poliovirus polyprotein. In other picornavirus reactions Glu may be substituted for Gln, and Ser or Thr for Gly.. Its function is as follows. Capsid proteins VP1, VP2, and VP3 form a closed capsid enclosing the viral positive strand RNA genome. All these proteins contain a beta-sheet structure called beta-barrel jelly roll. Together they form an icosahedral capsid (T=3) composed of 60 copies of each VP1, VP2, and VP3, with a diameter of approximately 300 Angstroms. VP1 is situated at the 12 fivefold axes, whereas VP2 and VP3 are located at the quasi-sixfold axes. The naked capsid interacts with the host receptor HAVCR1 to provide virion attachment to and probably entry into the target cell. VP0 precursor is a component of the immature procapsids. In terms of biological role, plays a role in the assembly of the 12 pentamers into an icosahedral structure. Has not been detected in mature virions, supposedly owing to its small size. Functionally, precursor component of immature procapsids that corresponds to an extended form of the structural protein VP1. After maturation, possibly by the host Cathepsin L, the assembly signal 2A is cleaved to give rise to the mature VP1 protein. Its function is as follows. Functions as a viroporin. Affects membrane integrity and causes an increase in membrane permeability. Involved in host intracellular membrane rearrangements probably to give rise to the viral factories. Does not disrupt calcium homeostasis or glycoprotein trafficking. Antagonizes the innate immune response of the host by suppressing IFN-beta synthesis, which it achieves by interfering with the RIG-I/IFIH1 pathway. Affects membrane integrity and causes an increase in membrane permeability. In terms of biological role, associates with and induces structural rearrangements of intracellular membranes. Displays RNA-binding activity. Functionally, the precursor 3ABC is targeted to the mitochondrial membrane where protease 3C activity cleaves and inhibits the host antiviral protein MAVS, thereby disrupting activation of IRF3 through the IFIH1/MDA5 pathway. In vivo, the protease activity of 3ABC precursor is more efficient in cleaving the 2BC precursor than that of protein 3C. The 3ABC precursor may therefore play a role in the proteolytic processing of the polyprotein. Possible viroporin. Its function is as follows. Interacts with the 3CD precursor and with RNA structures found at both the 5'- and 3'-termini of the viral genome. Since the 3AB precursor contains the hydrophobic domain 3A, it probably anchors the whole viral replicase complex to intracellular membranes on which viral RNA synthesis occurs. May serve as membrane anchor to the 3AB and 3ABC precursors via its hydrophobic domain. May interact with RNA. In terms of biological role, acts as a primer for viral RNA replication and remains covalently bound to viral genomic RNA. VPg is uridylylated prior to priming replication into VPg-pUpU. The VPg-pUpU is then used as primer on the genomic RNA poly(A) by the RNA-dependent RNA polymerase to replicate the viral genome. Functionally, cysteine protease that generates mature viral proteins from the precursor polyprotein. In addition to its proteolytic activity, it binds to viral RNA, and thus influences viral genome replication. RNA and substrate bind cooperatively to the protease. Cleaves IKBKG/NEMO to impair innate immune signaling. Cleaves host PABPC1 which may participate in the switch of viral translation to RNA synthesis. Its function is as follows. Interacts with the 3AB precursor and with RNA structures found at both the 5'- and 3'-termini of the viral genome. Disrupts TLR3 signaling by degrading the host adapter protein TICAM1/TRIF. RNA-directed RNA polymerase 3D-POL replicates genomic and antigenomic RNA by recognizing replications specific signals. This chain is Genome polyprotein, found in Human hepatitis A virus genotype IIIA (isolate NOR-21) (HHAV).